The following is a 78-amino-acid chain: MSGLGIMVLTLLLLVFMATSHQDAGEKQATQRDAINVRRRRSITRRVDEECNEYCDDRNKECCGRTNGHPRCANVCFG.

An N-terminal signal peptide occupies residues 1 to 24; sequence MSGLGIMVLTLLLLVFMATSHQDA. The propeptide occupies 25 to 44; the sequence is GEKQATQRDAINVRRRRSIT. 3 cysteine pairs are disulfide-bonded: Cys-51/Cys-63, Cys-55/Cys-72, and Cys-62/Cys-76. Phe-77 carries the post-translational modification Phenylalanine amide.

It belongs to the conotoxin O3 superfamily. In terms of tissue distribution, expressed by the venom duct.

The protein resides in the secreted. The sequence is that of Conotoxin TsMSGL-11 from Conus tessulatus (Tessellate cone).